Reading from the N-terminus, the 340-residue chain is Ketol-acid reductoisomerase (NADP(+)) (340 aa).

The KARI N-terminal Rossmann domain occupies 3–182 (VQMEYEKDVK…GAARVGLLET (180 aa)). NADP(+)-binding positions include 26–29 (YGSQ), Arg49, Ser53, and 83–86 (DEIQ). Residue His108 is part of the active site. Gly134 is an NADP(+) binding site. In terms of domain architecture, KARI C-terminal knotted spans 183-328 (TYKEETEEDL…AELRKAMPFV (146 aa)). Residues Asp191, Glu195, Glu227, and Glu231 each contribute to the Mg(2+) site. Residue Ser252 participates in substrate binding.

Belongs to the ketol-acid reductoisomerase family. The cofactor is Mg(2+).

It carries out the reaction (2R)-2,3-dihydroxy-3-methylbutanoate + NADP(+) = (2S)-2-acetolactate + NADPH + H(+). It catalyses the reaction (2R,3R)-2,3-dihydroxy-3-methylpentanoate + NADP(+) = (S)-2-ethyl-2-hydroxy-3-oxobutanoate + NADPH + H(+). It participates in amino-acid biosynthesis; L-isoleucine biosynthesis; L-isoleucine from 2-oxobutanoate: step 2/4. The protein operates within amino-acid biosynthesis; L-valine biosynthesis; L-valine from pyruvate: step 2/4. Its function is as follows. Involved in the biosynthesis of branched-chain amino acids (BCAA). Catalyzes an alkyl-migration followed by a ketol-acid reduction of (S)-2-acetolactate (S2AL) to yield (R)-2,3-dihydroxy-isovalerate. In the isomerase reaction, S2AL is rearranged via a Mg-dependent methyl migration to produce 3-hydroxy-3-methyl-2-ketobutyrate (HMKB). In the reductase reaction, this 2-ketoacid undergoes a metal-dependent reduction by NADPH to yield (R)-2,3-dihydroxy-isovalerate. In Streptococcus pneumoniae (strain CGSP14), this protein is Ketol-acid reductoisomerase (NADP(+)).